Consider the following 795-residue polypeptide: Protein ROOT HAIR DEFECTIVE 3 homolog 1 (795 aa).

Residues Met-1–Leu-682 lie on the Cytoplasmic side of the membrane. The GB1/RHD3-type G domain maps to Gly-39–Arg-254. Gly-49–Ser-56 provides a ligand contact to GTP. Residues Val-218–Ser-244 adopt a coiled-coil conformation. Residues Pro-683–Leu-703 traverse the membrane as a helical segment. Over Arg-704–Pro-706 the chain is Lumenal. A helical membrane pass occupies residues Leu-707–Asp-727. Residues Ile-728 to Asp-795 are Cytoplasmic-facing. Residues Gln-761–Asp-795 are disordered. Residues Ser-775–Asn-784 show a composition bias toward low complexity. The segment covering Pro-785–Asp-795 has biased composition (basic and acidic residues).

This sequence belongs to the TRAFAC class dynamin-like GTPase superfamily. GB1/RHD3 GTPase family. RHD3 subfamily. As to expression, specifically expressed in flowers.

The protein resides in the endoplasmic reticulum membrane. Probable GTP-binding protein that may be involved in cell development. The sequence is that of Protein ROOT HAIR DEFECTIVE 3 homolog 1 from Arabidopsis thaliana (Mouse-ear cress).